Here is a 264-residue protein sequence, read N- to C-terminus: Acetylglutamate kinase (264 aa).

Substrate is bound by residues 50 to 51 (GG), Arg-72, and Asn-164.

It belongs to the acetylglutamate kinase family. ArgB subfamily.

The protein localises to the cytoplasm. The catalysed reaction is N-acetyl-L-glutamate + ATP = N-acetyl-L-glutamyl 5-phosphate + ADP. It participates in amino-acid biosynthesis; L-arginine biosynthesis; N(2)-acetyl-L-ornithine from L-glutamate: step 2/4. Functionally, catalyzes the ATP-dependent phosphorylation of N-acetyl-L-glutamate. This chain is Acetylglutamate kinase, found in Moritella profunda.